The chain runs to 348 residues: Ion-translocating oxidoreductase complex subunit D (348 aa).

3 helical membrane passes run 20–39, 72–91, and 120–140; these read LMKWVAICALPGLLAQTYFF, ALRDYSAVVTAWLLSVAIPP, and PFNPAMVAYVVLLISFPVQMT. Thr-187 carries the post-translational modification FMN phosphoryl threonine. 5 helical membrane-spanning segments follow: residues 214–234, 241–261, 266–286, 300–320, and 321–341; these read LAGVGWEWVNLAYLIGGLVLI, WHIPVAFLGSLTLFSLMFLMF, TASPTIHLLSGATMLGAFFIA, LVFGALIGGLVFIIRSWGGFP, and DGVAFAVLLANMCVPLIDYYT.

The protein belongs to the NqrB/RnfD family. In terms of assembly, the complex is composed of six subunits: RnfA, RnfB, RnfC, RnfD, RnfE and RnfG. FMN is required as a cofactor.

The protein resides in the cell inner membrane. Its function is as follows. Part of a membrane-bound complex that couples electron transfer with translocation of ions across the membrane. This chain is Ion-translocating oxidoreductase complex subunit D, found in Vibrio atlanticus (strain LGP32) (Vibrio splendidus (strain Mel32)).